Reading from the N-terminus, the 1016-residue chain is Rho family-interacting cell polarization regulator 2 (1016 aa).

2 positions are modified to phosphoserine: serine 21 and serine 37. The segment at 44–73 (AVKKPQAKLKKMHNLGHKNSSPPKEPQPKR) is disordered. The segment covering 48–59 (PQAKLKKMHNLG) has biased composition (basic residues). Residues 55 to 113 (MHNLGHKNSSPPKEPQPKRVEEVYRALKNGLDEYLEVHQTELDKLTTQLKDMRRNSRLG) form an involved in cell filopodia formation region. A coiled-coil region spans residues 85 to 112 (LDEYLEVHQTELDKLTTQLKDMRRNSRL). Serine 341 is modified (phosphoserine). The segment covering 414–428 (TSTELPPGSQSSQNE) has biased composition (polar residues). The tract at residues 414–469 (TSTELPPGSQSSQNEGLKDSSSASCSSSSREGSEPRPHPEGETQGLGKPEGCPVAT) is disordered. The span at 433-442 (SSSASCSSSS) shows a compositional bias: low complexity. Basic and acidic residues predominate over residues 444-454 (EGSEPRPHPEG). Serine 520 and serine 532 each carry phosphoserine. A disordered region spans residues 636–656 (DSVFSDTETEKNSYRSVHPEA). The segment covering 643 to 656 (ETEKNSYRSVHPEA) has biased composition (basic and acidic residues).

This sequence belongs to the RIPOR family. As to quaternary structure, homooligomer; homooligomerization is regulated by RHOC and leads to the formation of concatemers through the association of N- and C-termini. Interacts (phosphorylated form) with 14-3-3 proteins; these interactions occur during myogenic cell differentiation and also induces T cell proliferation arrest. Interacts (phosphorylated form) with HDAC6; this interaction occurs during early myogenic differentiation, prevents HDAC6 to deacetylate tubulin and also induces T cell proliferation arrest. Interacts with DYSF; this interaction occurs during early myogenic differentiation. Interacts with MYOF. Interacts (via active GTP- or inactive GDP-bound forms) with RHOA; this interaction is direct, blocks the loading of GTP to RHOA and decreases upon chemokine CCL19 stimulation in primary T lymphocytes. Interacts with RHOC. Interacts (via phosphorylated form) with YWHAB; this interaction occurs in a chemokine-dependent manner and does not compete for binding of RIPOR2 with RHOA nor blocks inhibition of RIPOR2-mediated RHOA activity. Interacts with YWHAE. Interacts with YWHAQ. In terms of processing, phosphorylated. Chemokine-induced phosphorylation in neutrophils occurs in a PKC- and AKT-dependent manner, resulting in RIPOR2 interaction with YWHAB and stabilization. Phosphorylated by PKCA, AKT1 and MAPKAPK1A; in vitro.

It is found in the cytoplasm. Its subcellular location is the cytoskeleton. The protein localises to the cell projection. It localises to the filopodium. The protein resides in the apical cell membrane. It is found in the stereocilium. Its subcellular location is the stereocilium membrane. In terms of biological role, acts as an inhibitor of the small GTPase RHOA and plays several roles in the regulation of myoblast and hair cell differentiation, lymphocyte T proliferation and neutrophil polarization. Plays a role in fetal mononuclear myoblast differentiation by promoting filopodia and myotube formation. Maintains naive T lymphocytes in a quiescent state and prevents chemokine-induced T lymphocyte responses, such as cell adhesion, polarization and migration. Involved also in the regulation of neutrophil polarization, chemotaxis and adhesion. Required for normal development of inner and outer hair cell stereocilia within the cochlea of the inner ear. Plays a role for maintaining the structural organization of the basal domain of stereocilia. Involved in mechanosensory hair cell function. Required for normal hearing. In Bos taurus (Bovine), this protein is Rho family-interacting cell polarization regulator 2.